We begin with the raw amino-acid sequence, 94 residues long: Evasin P1086 (94 aa).

The N-terminal stretch at 1–28 (MAFNVITFLQLAVFVVILFNINLHSASA) is a signal peptide. Disulfide bonds link Cys48–Cys67, Cys52–Cys69, and Cys63–Cys80. An N-linked (GlcNAc...) asparagine glycan is attached at Asn74.

The protein resides in the secreted. Its function is as follows. Salivary chemokine-binding protein which binds to host chemokines CXCL1, CXCL2, CXCL3, CXCL5, CXCL6, CXCL10, CXCL12 and CXCL13. This Ixodes ricinus (Common tick) protein is Evasin P1086.